A 286-amino-acid chain; its full sequence is ATP synthase gamma chain (286 aa).

Belongs to the ATPase gamma chain family. In terms of assembly, F-type ATPases have 2 components, CF(1) - the catalytic core - and CF(0) - the membrane proton channel. CF(1) has five subunits: alpha(3), beta(3), gamma(1), delta(1), epsilon(1). CF(0) has three main subunits: a, b and c.

It is found in the cell inner membrane. Functionally, produces ATP from ADP in the presence of a proton gradient across the membrane. The gamma chain is believed to be important in regulating ATPase activity and the flow of protons through the CF(0) complex. This chain is ATP synthase gamma chain, found in Pseudomonas putida (strain W619).